A 492-amino-acid chain; its full sequence is Ketol-acid reductoisomerase (NADP(+)) (492 aa).

The KARI N-terminal Rossmann domain occupies 15-208; sequence AQLGKCRFMA…GGHRAGVLES (194 aa). NADP(+) contacts are provided by residues 45 to 48, R68, R76, S78, and 108 to 110; these read CGAQ and DKQ. Residue H132 is part of the active site. G158 is a binding site for NADP(+). KARI C-terminal knotted domains are found at residues 209–344 and 345–485; these read SFVA…NAPQ and FEGK…MTDM. Positions 217, 221, 389, and 393 each coordinate Mg(2+). A substrate-binding site is contributed by S414.

The protein belongs to the ketol-acid reductoisomerase family. Requires Mg(2+) as cofactor.

The catalysed reaction is (2R)-2,3-dihydroxy-3-methylbutanoate + NADP(+) = (2S)-2-acetolactate + NADPH + H(+). It catalyses the reaction (2R,3R)-2,3-dihydroxy-3-methylpentanoate + NADP(+) = (S)-2-ethyl-2-hydroxy-3-oxobutanoate + NADPH + H(+). It functions in the pathway amino-acid biosynthesis; L-isoleucine biosynthesis; L-isoleucine from 2-oxobutanoate: step 2/4. The protein operates within amino-acid biosynthesis; L-valine biosynthesis; L-valine from pyruvate: step 2/4. In terms of biological role, involved in the biosynthesis of branched-chain amino acids (BCAA). Catalyzes an alkyl-migration followed by a ketol-acid reduction of (S)-2-acetolactate (S2AL) to yield (R)-2,3-dihydroxy-isovalerate. In the isomerase reaction, S2AL is rearranged via a Mg-dependent methyl migration to produce 3-hydroxy-3-methyl-2-ketobutyrate (HMKB). In the reductase reaction, this 2-ketoacid undergoes a metal-dependent reduction by NADPH to yield (R)-2,3-dihydroxy-isovalerate. The sequence is that of Ketol-acid reductoisomerase (NADP(+)) from Yersinia enterocolitica serotype O:8 / biotype 1B (strain NCTC 13174 / 8081).